Reading from the N-terminus, the 569-residue chain is Potassium-transporting ATPase potassium-binding subunit (569 aa).

A run of 10 helical transmembrane segments spans residues 5–25 (GWAE…PLGV), 65–85 (GYAG…YAVL), 135–155 (LVLT…AAAL), 179–199 (LYVL…LGLP), 254–274 (LTNL…FFAF), 286–306 (ALVI…YWTE), 383–403 (GIAV…LMVG), 422–442 (LLTV…AAVL), 489–509 (MGVA…AMAG), and 528–548 (GGLF…LQFF).

It belongs to the KdpA family. As to quaternary structure, the system is composed of three essential subunits: KdpA, KdpB and KdpC.

The protein resides in the cell inner membrane. Its function is as follows. Part of the high-affinity ATP-driven potassium transport (or Kdp) system, which catalyzes the hydrolysis of ATP coupled with the electrogenic transport of potassium into the cytoplasm. This subunit binds the periplasmic potassium ions and delivers the ions to the membrane domain of KdpB through an intramembrane tunnel. In Caulobacter sp. (strain K31), this protein is Potassium-transporting ATPase potassium-binding subunit.